The following is a 483-amino-acid chain: Cobyric acid synthase (483 aa).

The 188-residue stretch at 251-438 (ALIVAVPMLP…LHGVFSADRF (188 aa)) folds into the GATase cobBQ-type domain. The active-site Nucleophile is the Cys333. The active site involves His430.

It belongs to the CobB/CobQ family. CobQ subfamily.

The protein operates within cofactor biosynthesis; adenosylcobalamin biosynthesis. Its function is as follows. Catalyzes amidations at positions B, D, E, and G on adenosylcobyrinic A,C-diamide. NH(2) groups are provided by glutamine, and one molecule of ATP is hydrogenolyzed for each amidation. The chain is Cobyric acid synthase from Brucella melitensis biotype 2 (strain ATCC 23457).